The primary structure comprises 204 residues: Inositol diphosphatase DSP5 (204 aa).

Positions 19 to 168 (NFSMVEDEIY…FDVLRLKQCL (150 aa)) constitute a Tyrosine-protein phosphatase domain. Positions 75-87 (FGIEGKTDPPTPM) are WPD loop important for active site topology. Residue Cys-111 is the Phosphocysteine intermediate of the active site.

The protein belongs to the protein-tyrosine phosphatase family. Atypical dual-specificity phosphatase Siw14-like subfamily. Highly expressed in flowers. Expressed at low levels in roots, leaves, stems and siliques.

It carries out the reaction 5-diphospho-1D-myo-inositol 1,2,3,4,6-pentakisphosphate + H2O = 1D-myo-inositol hexakisphosphate + phosphate + H(+). It catalyses the reaction 1,5-bis(diphospho)-1D-myo-inositol 2,3,4,6-tetrakisphosphate + H2O = 1-diphospho-1D-myo-inositol 2,3,4,5,6-pentakisphosphate + phosphate + 2 H(+). The catalysed reaction is 3,5-bis(diphospho)-1D-myo-inositol 1,2,4,6-tetrakisphosphate + H2O = 3-diphospho-1D-myo-inositol 1,2,4,5,6-pentakisphosphate + phosphate + 2 H(+). The enzyme catalyses 6-diphospho-1D-myo-inositol pentakisphosphate + H2O = 1D-myo-inositol hexakisphosphate + phosphate + H(+). Functionally, cleaves the beta-phosphate at the 5-position of soluble inositol pyrophosphates. Has highest activity on 5-diphosphoinositol 1,2,3,4,6-pentakisphosphate (5-InsP(7)). Possesses low phosphotyrosine phosphatase activity in vitro. Dephosphorylates the phosphoinositides PI(3,5)P2. Hydrolyzes O-methylfluorescein phosphate in vitro. This is Inositol diphosphatase DSP5 from Arabidopsis thaliana (Mouse-ear cress).